The primary structure comprises 253 residues: Acidic endochitinase pcht28 (253 aa).

Residues 1-24 (MKFNIVSPVALSCLFFLFLTGTLA) form the signal peptide. The Proton donor role is filled by Glu-92. An intrachain disulfide couples Cys-212 to Cys-244.

It belongs to the glycosyl hydrolase 19 family. Chitinase class II subfamily.

The protein localises to the secreted. It localises to the extracellular space. The enzyme catalyses Random endo-hydrolysis of N-acetyl-beta-D-glucosaminide (1-&gt;4)-beta-linkages in chitin and chitodextrins.. Functionally, defense against chitin-containing fungal pathogens. The chain is Acidic endochitinase pcht28 from Solanum chilense (Tomato).